The following is a 66-amino-acid chain: Beta-toxin Cbo2 (66 aa).

The region spanning 1-66 (KEGYIVNYHD…VWPLPKKTCN (66 aa)) is the LCN-type CS-alpha/beta domain. Cystine bridges form between Cys-12-Cys-65, Cys-16-Cys-41, Cys-25-Cys-46, and Cys-29-Cys-48. Asn-66 carries the post-translational modification Asparagine amide.

The protein belongs to the long (4 C-C) scorpion toxin superfamily. Sodium channel inhibitor family. Beta subfamily. Expressed by the venom gland.

It is found in the secreted. Functionally, beta toxins bind voltage-independently at site-4 of sodium channels and shift the voltage of activation toward more negative potentials thereby affecting sodium channel activation and promoting spontaneous and repetitive firing. A mixture of Cbo2 and Cbo3 is weakly active on the human voltage-gated sodium channels Nav1.4/SCN4A and Nav1.6/SCN8A when tested at 200 nM. In vivo, is toxic to mice when intraperitoneally injected. The protein is Beta-toxin Cbo2 of Centruroides bonito (Scorpion).